The sequence spans 363 residues: tRNA (guanine(26)-N(2))-dimethyltransferase (363 aa).

The Trm1 methyltransferase domain maps to 5 to 352 (VLRREGGVKF…GEYGEVLMAF (348 aa)). S-adenosyl-L-methionine is bound by residues Arg-40, Arg-67, Asp-85, Asp-111, and Ala-112.

This sequence belongs to the class I-like SAM-binding methyltransferase superfamily. Trm1 family.

The enzyme catalyses guanosine(26) in tRNA + 2 S-adenosyl-L-methionine = N(2)-dimethylguanosine(26) in tRNA + 2 S-adenosyl-L-homocysteine + 2 H(+). Its function is as follows. Dimethylates a single guanine residue at position 26 of a number of tRNAs using S-adenosyl-L-methionine as donor of the methyl groups. This chain is tRNA (guanine(26)-N(2))-dimethyltransferase, found in Pyrobaculum aerophilum (strain ATCC 51768 / DSM 7523 / JCM 9630 / CIP 104966 / NBRC 100827 / IM2).